The chain runs to 430 residues: Tyrosine--tRNA ligase (430 aa).

Tyrosine 36 serves as a coordination point for L-tyrosine. A 'HIGH' region motif is present at residues 41–50; the sequence is PTASSLHVGS. Residues tyrosine 170 and glutamine 174 each coordinate L-tyrosine. The 'KMSKS' region signature appears at 230-234; the sequence is KMGKT. Lysine 233 provides a ligand contact to ATP. One can recognise an S4 RNA-binding domain in the interval 362–427; sequence VPAFELFDEI…GKKNYHRLVL (66 aa).

It belongs to the class-I aminoacyl-tRNA synthetase family. TyrS type 1 subfamily. In terms of assembly, homodimer.

It is found in the cytoplasm. It carries out the reaction tRNA(Tyr) + L-tyrosine + ATP = L-tyrosyl-tRNA(Tyr) + AMP + diphosphate + H(+). Its function is as follows. Catalyzes the attachment of tyrosine to tRNA(Tyr) in a two-step reaction: tyrosine is first activated by ATP to form Tyr-AMP and then transferred to the acceptor end of tRNA(Tyr). The sequence is that of Tyrosine--tRNA ligase from Desulfatibacillum aliphaticivorans.